The sequence spans 421 residues: Adenylosuccinate synthetase (421 aa).

GTP is bound by residues glycine 11–lysine 17 and glycine 39–threonine 41. Catalysis depends on aspartate 12, which acts as the Proton acceptor. Aspartate 12 and glycine 39 together coordinate Mg(2+). Residues aspartate 12 to lysine 15, asparagine 37 to histidine 40, threonine 129, arginine 143, asparagine 219, threonine 234, and arginine 298 each bind IMP. The Proton donor role is filled by histidine 40. Valine 294–arginine 300 serves as a coordination point for substrate. GTP contacts are provided by residues arginine 300, lysine 326–aspartate 328, and glycine 409–glycine 411.

This sequence belongs to the adenylosuccinate synthetase family. Homodimer. The cofactor is Mg(2+).

Its subcellular location is the cytoplasm. The enzyme catalyses IMP + L-aspartate + GTP = N(6)-(1,2-dicarboxyethyl)-AMP + GDP + phosphate + 2 H(+). Its pathway is purine metabolism; AMP biosynthesis via de novo pathway; AMP from IMP: step 1/2. In terms of biological role, plays an important role in the de novo pathway and in the salvage pathway of purine nucleotide biosynthesis. Catalyzes the first committed step in the biosynthesis of AMP from IMP. The sequence is that of Adenylosuccinate synthetase from Paracoccidioides brasiliensis (strain Pb03).